The following is a 251-amino-acid chain: Capsid protein (251 aa).

The tract at residues 1–29 is disordered; sequence MPKRDAPWRSMAGTSKVSRNANYSPRSGI. Residues 3-20 carry the Bipartite nuclear localization signal motif; the sequence is KRDAPWRSMAGTSKVSRN. Over residues 12 to 25 the composition is skewed to polar residues; it reads AGTSKVSRNANYSP. A Nuclear localization signal motif is present at residues 35-49; it reads KAAEWVNRPMYRKPR. The segment at 63-80 is a zinc-finger region; it reads CEGPCKVQSFEQRHDILH. The Nuclear export signal motif lies at 96 to 117; the sequence is ITHRVGKRFCVKSVYILGKIWM. Positions 195 to 242 match the Bipartite nuclear localization signal motif; that stretch reads RRFWKVNNHVVYNHQEAGKYENHTENALLLYMACTHASNPVYATLKIR.

The protein belongs to the geminiviridae capsid protein family. As to quaternary structure, homomultimer. Binds to single-stranded and double-stranded viral DNA. Interacts (via nuclear localization signals) with host importin alpha-1a.

Its subcellular location is the virion. The protein resides in the host nucleus. Encapsidates the viral DNA into characteristic twinned ('geminate') particles. Binds the genomic viral ssDNA and shuttles it into and out of the cell nucleus. The CP of bipartite geminiviruses is not required for cell-to-cell or systemic movement. This is Capsid protein from Solanum tuberosum (Potato).